We begin with the raw amino-acid sequence, 110 residues long: Nucleoid-associated protein KPN78578_04440 (110 aa).

It belongs to the YbaB/EbfC family. As to quaternary structure, homodimer.

The protein localises to the cytoplasm. Its subcellular location is the nucleoid. Functionally, binds to DNA and alters its conformation. May be involved in regulation of gene expression, nucleoid organization and DNA protection. This chain is Nucleoid-associated protein KPN78578_04440, found in Klebsiella pneumoniae subsp. pneumoniae (strain ATCC 700721 / MGH 78578).